Here is a 432-residue protein sequence, read N- to C-terminus: Glutamyl-tRNA reductase (432 aa).

Residues 55–58, S114, 119–121, and Q125 contribute to the substrate site; these read TCNR and ETQ. The active-site Nucleophile is the C56. An NADP(+)-binding site is contributed by 194–199; it reads GAGEMI.

Belongs to the glutamyl-tRNA reductase family. In terms of assembly, homodimer.

It carries out the reaction (S)-4-amino-5-oxopentanoate + tRNA(Glu) + NADP(+) = L-glutamyl-tRNA(Glu) + NADPH + H(+). The protein operates within porphyrin-containing compound metabolism; protoporphyrin-IX biosynthesis; 5-aminolevulinate from L-glutamyl-tRNA(Glu): step 1/2. Catalyzes the NADPH-dependent reduction of glutamyl-tRNA(Glu) to glutamate 1-semialdehyde (GSA). This chain is Glutamyl-tRNA reductase, found in Burkholderia cenocepacia (strain ATCC BAA-245 / DSM 16553 / LMG 16656 / NCTC 13227 / J2315 / CF5610) (Burkholderia cepacia (strain J2315)).